We begin with the raw amino-acid sequence, 527 residues long: Succinate-semialdehyde dehydrogenase, mitochondrial (527 aa).

A mitochondrion-targeting transit peptide spans 1–35 (MAMAMAMRRAAALGARHILAASSTSSSGVLLRRHM). NAD(+)-binding positions include Arg208, 223–226 (KPSE), and 276–281 (GSTAVG). Arg208 contacts substrate. Glu298 functions as the Proton acceptor in the catalytic mechanism. Substrate-binding residues include Arg326, Cys332, and Ser489. The active-site Nucleophile is the Cys332. Cys332 and Cys334 form a disulfide bridge.

The protein belongs to the aldehyde dehydrogenase family. In terms of assembly, homotetramer.

The protein resides in the mitochondrion matrix. The enzyme catalyses succinate semialdehyde + NAD(+) + H2O = succinate + NADH + 2 H(+). It functions in the pathway amino-acid degradation; 4-aminobutanoate degradation. Its activity is regulated as follows. Redox-regulated. Inhibited under oxydizing conditions. Oxidizes specifically succinate semialdehyde. Involved in plant response to environmental stress by preventing the accumulation of reactive oxygen species. In Oryza sativa subsp. japonica (Rice), this protein is Succinate-semialdehyde dehydrogenase, mitochondrial (ALDH5F1).